The chain runs to 398 residues: 1-deoxy-D-xylulose 5-phosphate reductoisomerase (398 aa).

Residues T21, G22, S23, I24, G47, N50, and N127 each contribute to the NADPH site. K128 lines the 1-deoxy-D-xylulose 5-phosphate pocket. E129 contacts NADPH. Position 151 (D151) interacts with Mn(2+). 4 residues coordinate 1-deoxy-D-xylulose 5-phosphate: S152, E153, S177, and H200. A Mn(2+)-binding site is contributed by E153. An NADPH-binding site is contributed by G206. The 1-deoxy-D-xylulose 5-phosphate site is built by S213, N218, K219, and E222. E222 contributes to the Mn(2+) binding site.

It belongs to the DXR family. It depends on Mg(2+) as a cofactor. Mn(2+) is required as a cofactor.

The catalysed reaction is 2-C-methyl-D-erythritol 4-phosphate + NADP(+) = 1-deoxy-D-xylulose 5-phosphate + NADPH + H(+). It functions in the pathway isoprenoid biosynthesis; isopentenyl diphosphate biosynthesis via DXP pathway; isopentenyl diphosphate from 1-deoxy-D-xylulose 5-phosphate: step 1/6. Its function is as follows. Catalyzes the NADPH-dependent rearrangement and reduction of 1-deoxy-D-xylulose-5-phosphate (DXP) to 2-C-methyl-D-erythritol 4-phosphate (MEP). The protein is 1-deoxy-D-xylulose 5-phosphate reductoisomerase of Mycolicibacterium smegmatis (strain ATCC 700084 / mc(2)155) (Mycobacterium smegmatis).